Here is a 134-residue protein sequence, read N- to C-terminus: UPF0412 protein YaaI (134 aa).

An N-terminal signal peptide occupies residues 1–23 (MKSVFTISASLAISLMLCCTAQA).

It belongs to the UPF0412 family.

The protein is UPF0412 protein YaaI of Shigella dysenteriae serotype 1 (strain Sd197).